The following is an 816-amino-acid chain: Leucine--tRNA ligase (816 aa).

A 'HIGH' region motif is present at residues 46 to 56 (PYPSGALHMGH). The short motif at 638 to 642 (KMSKS) is the 'KMSKS' region element. Residue Lys641 coordinates ATP.

This sequence belongs to the class-I aminoacyl-tRNA synthetase family.

The protein localises to the cytoplasm. It catalyses the reaction tRNA(Leu) + L-leucine + ATP = L-leucyl-tRNA(Leu) + AMP + diphosphate. This is Leucine--tRNA ligase from Xanthomonas campestris pv. campestris (strain ATCC 33913 / DSM 3586 / NCPPB 528 / LMG 568 / P 25).